The sequence spans 603 residues: Putative lipase atg15 (603 aa).

The Cytoplasmic segment spans residues 1–20 (MDQPHRRTRKWHLMDLSVST). Residues 21 to 41 (LLMSLALVLPSCVSAYQPVYF) traverse the membrane as a helical; Signal-anchor for type II membrane protein segment. The Lumenal segment spans residues 42–603 (RSQEATPFIP…ITPAPILIDL (562 aa)). N-linked (GlcNAc...) asparagine glycosylation is found at N166, N201, N223, N281, and N305. S321 serves as the catalytic Charge relay system. N467 carries an N-linked (GlcNAc...) asparagine glycan.

Belongs to the AB hydrolase superfamily. Lipase family. In terms of assembly, binds to both phosphatidylinositol (PI) and phosphatidylinositol 3,5-bisphosphate (PIP2).

It is found in the endosome. The protein resides in the multivesicular body membrane. It localises to the prevacuolar compartment membrane. The enzyme catalyses a triacylglycerol + H2O = a diacylglycerol + a fatty acid + H(+). In terms of biological role, lipase which is essential for lysis of subvacuolar cytoplasm to vacuole targeted bodies and intravacuolar autophagic bodies. Involved in the lysis of intravacuolar multivesicular body (MVB) vesicles. The intravacuolar membrane disintegration by atg15 is critical to life span extension. The protein is Putative lipase atg15 (atg15) of Emericella nidulans (strain FGSC A4 / ATCC 38163 / CBS 112.46 / NRRL 194 / M139) (Aspergillus nidulans).